Reading from the N-terminus, the 468-residue chain is Glutathione reductase (468 aa).

FAD contacts are provided by Ser-17 and Gly-18. A glutathione-binding site is contributed by Ser-17. Arg-24 lines the glutathione pocket. Residues Glu-38, Thr-45, Cys-46, and Lys-54 each contribute to the FAD site. Cys-46 and Cys-51 are oxidised to a cystine. Tyr-103 is a glutathione binding site. Ala-119 is a binding site for FAD. NADP(+)-binding residues include Ala-185, Ile-188, Glu-191, Arg-208, Arg-214, and Gly-276. Asp-317 serves as a coordination point for FAD. Glu-323 lines the NADP(+) pocket. Residue Thr-325 participates in FAD binding. Arg-333 serves as a coordination point for glutathione. Val-358 serves as a coordination point for NADP(+). Lys-410 is a glutathione binding site. His-457 is a binding site for FAD. The active-site Proton acceptor is the His-457.

It belongs to the class-I pyridine nucleotide-disulfide oxidoreductase family. As to quaternary structure, homodimer. FAD serves as cofactor.

The protein localises to the cytoplasm. It localises to the mitochondrion. The catalysed reaction is 2 glutathione + NADP(+) = glutathione disulfide + NADPH + H(+). Its function is as follows. Catalyzes the reduction of glutathione disulfide (GSSG) to reduced glutathione (GSH). Constitutes the major mechanism to maintain a high GSH:GSSG ratio in the cytosol. This chain is Glutathione reductase (gtr-1), found in Neurospora crassa (strain ATCC 24698 / 74-OR23-1A / CBS 708.71 / DSM 1257 / FGSC 987).